A 556-amino-acid polypeptide reads, in one-letter code: Putative cysteine ligase BshC (556 aa).

2 coiled-coil regions span residues 408–442 (ILQK…IAQA) and 468–513 (LGQV…ANLT).

This sequence belongs to the BshC family.

Functionally, involved in bacillithiol (BSH) biosynthesis. May catalyze the last step of the pathway, the addition of cysteine to glucosamine malate (GlcN-Mal) to generate BSH. The protein is Putative cysteine ligase BshC of Symbiobacterium thermophilum (strain DSM 24528 / JCM 14929 / IAM 14863 / T).